The sequence spans 468 residues: 3-isopropylmalate dehydratase large subunit (468 aa).

3 residues coordinate [4Fe-4S] cluster: Cys347, Cys407, and Cys410.

The protein belongs to the aconitase/IPM isomerase family. LeuC type 1 subfamily. In terms of assembly, heterodimer of LeuC and LeuD. It depends on [4Fe-4S] cluster as a cofactor.

It catalyses the reaction (2R,3S)-3-isopropylmalate = (2S)-2-isopropylmalate. It participates in amino-acid biosynthesis; L-leucine biosynthesis; L-leucine from 3-methyl-2-oxobutanoate: step 2/4. Its function is as follows. Catalyzes the isomerization between 2-isopropylmalate and 3-isopropylmalate, via the formation of 2-isopropylmaleate. The chain is 3-isopropylmalate dehydratase large subunit from Synechococcus elongatus (strain ATCC 33912 / PCC 7942 / FACHB-805) (Anacystis nidulans R2).